The primary structure comprises 582 residues: WD repeat-containing protein JIP5 (582 aa).

WD repeat units lie at residues 27–68, 125–168, 177–216, 265–310, and 373–410; these read KYPE…EAQS, RHKG…VLSK, DKND…SNQL, DQED…LMDQ, and GPAD…LNSD. Disordered stretches follow at residues 405 to 496 and 531 to 582; these read ETLN…DTEL and TKEQ…FDDL. Composition is skewed to acidic residues over residues 410–438 and 447–485; these read DSDD…DDDV and EVND…ENVT. Basic and acidic residues-rich tracts occupy residues 531 to 540 and 570 to 582; these read TKEQSTKKAD and QKHE…FDDL.

Belongs to the WD repeat WDR55 family.

The protein localises to the nucleus. The protein resides in the nucleolus. This is WD repeat-containing protein JIP5 (JIP5) from Debaryomyces hansenii (strain ATCC 36239 / CBS 767 / BCRC 21394 / JCM 1990 / NBRC 0083 / IGC 2968) (Yeast).